Here is a 311-residue protein sequence, read N- to C-terminus: Aspartate carbamoyltransferase catalytic subunit (311 aa).

Carbamoyl phosphate contacts are provided by Arg55 and Thr56. Residue Lys85 coordinates L-aspartate. Residues Arg106, His135, and Gln138 each contribute to the carbamoyl phosphate site. Arg168 and Arg230 together coordinate L-aspartate. Residues Leu268 and Pro269 each coordinate carbamoyl phosphate.

The protein belongs to the aspartate/ornithine carbamoyltransferase superfamily. ATCase family. As to quaternary structure, heterododecamer (2C3:3R2) of six catalytic PyrB chains organized as two trimers (C3), and six regulatory PyrI chains organized as three dimers (R2).

The enzyme catalyses carbamoyl phosphate + L-aspartate = N-carbamoyl-L-aspartate + phosphate + H(+). It participates in pyrimidine metabolism; UMP biosynthesis via de novo pathway; (S)-dihydroorotate from bicarbonate: step 2/3. In terms of biological role, catalyzes the condensation of carbamoyl phosphate and aspartate to form carbamoyl aspartate and inorganic phosphate, the committed step in the de novo pyrimidine nucleotide biosynthesis pathway. The protein is Aspartate carbamoyltransferase catalytic subunit of Serratia proteamaculans (strain 568).